A 137-amino-acid polypeptide reads, in one-letter code: Competence protein ComGG (137 aa).

The chain crosses the membrane as a helical span at residues 10–30 (GVLLYAVTIAAIFSLLLQFYL). The disordered stretch occupies residues 106-137 (EKRDKKEEVATDSSEKVEKKKSEEKPEKKENS).

As to quaternary structure, the transformation pili are flexible filaments, consisting mainly of the major pilin ComGC and smaller amounts of the minor pilins, including at least ComGD, ComGF and ComGG, and perhaps ComGE. Interacts with ComGC; the interaction is probably direct. Interacts with ComGD. Interacts with ComGE. Interacts with ComGF. May act as a link between ComGC, ComGD and ComGF.

Its subcellular location is the fimbrium. The protein localises to the cell membrane. In terms of biological role, required for formation of the type IV-like pilus (T4P) that plays a role in transformation. Transformation pili are dynamically extended and retracted, perhaps thereby promoting DNA uptake and transformation. Required for transformation. This chain is Competence protein ComGG, found in Streptococcus pneumoniae (strain ATCC BAA-255 / R6).